A 308-amino-acid chain; its full sequence is Ribosomal RNA small subunit methyltransferase H (308 aa).

S-adenosyl-L-methionine is bound by residues 36 to 38 (GGH), Asp-55, Phe-82, Asp-103, and Gln-110.

This sequence belongs to the methyltransferase superfamily. RsmH family.

The protein localises to the cytoplasm. It catalyses the reaction cytidine(1402) in 16S rRNA + S-adenosyl-L-methionine = N(4)-methylcytidine(1402) in 16S rRNA + S-adenosyl-L-homocysteine + H(+). Functionally, specifically methylates the N4 position of cytidine in position 1402 (C1402) of 16S rRNA. The polypeptide is Ribosomal RNA small subunit methyltransferase H (Helicobacter pylori (strain J99 / ATCC 700824) (Campylobacter pylori J99)).